The following is a 134-amino-acid chain: Interleukin-5 (134 aa).

Positions 1–19 are cleaved as a signal peptide; it reads MRMLLHLSLLALGASYMYA. Thr22 carries an O-linked (GalNAc...) threonine glycan. N-linked (GlcNAc...) asparagine glycosylation is found at Asn47 and Asn90.

The protein belongs to the IL-5 family. As to quaternary structure, homodimer; disulfide-linked. Interacts with IL5RA. Interacts with CSF2RB.

Its subcellular location is the secreted. In terms of biological role, homodimeric cytokine expressed predominantly by T-lymphocytes and NK cells that plays an important role in the survival, differentiation, and chemotaxis of eosinophils. Also acts on activated and resting B-cells to induce immunoglobulin production, growth, and differentiation. Mechanistically, exerts its biological effects through a receptor composed of IL5RA subunit and the cytokine receptor common subunit beta/CSF2RB. Binding to the receptor leads to activation of various kinases including LYN, SYK and JAK2 and thereby propagates signals through the RAS-MAPK and JAK-STAT5 pathways respectively. This chain is Interleukin-5 (IL5), found in Cercocebus atys (Sooty mangabey).